Consider the following 377-residue polypeptide: 4-hydroxy-tetrahydrodipicolinate synthase 2, chloroplastic (377 aa).

The N-terminal 51 residues, 1–51 (MMAAQPTANPGVRLGWKAPGALASPPRLALSRSAAAPLASHRVGRGKFSAA), are a transit peptide targeting the chloroplast. Thr-120 contributes to the pyruvate binding site. Residue Tyr-206 is the Proton donor/acceptor of the active site. The active-site Schiff-base intermediate with substrate is Lys-234. A pyruvate-binding site is contributed by Ile-273.

This sequence belongs to the DapA family. As to quaternary structure, tetramer of modified subunits derived from two genes in different combinations.

The protein resides in the plastid. It localises to the chloroplast. It carries out the reaction L-aspartate 4-semialdehyde + pyruvate = (2S,4S)-4-hydroxy-2,3,4,5-tetrahydrodipicolinate + H2O + H(+). It functions in the pathway amino-acid biosynthesis; L-lysine biosynthesis via DAP pathway; (S)-tetrahydrodipicolinate from L-aspartate: step 3/4. Sensitive to lysine inhibition. This inhibition increase in an allosteric manner with increasing concentration of the inhibitor. Functionally, catalyzes the condensation of (S)-aspartate-beta-semialdehyde [(S)-ASA] and pyruvate to 4-hydroxy-tetrahydrodipicolinate (HTPA). The protein is 4-hydroxy-tetrahydrodipicolinate synthase 2, chloroplastic of Triticum aestivum (Wheat).